The chain runs to 406 residues: 2,3-bisphosphoglycerate-independent phosphoglycerate mutase (406 aa).

Belongs to the BPG-independent phosphoglycerate mutase family. A-PGAM subfamily.

The catalysed reaction is (2R)-2-phosphoglycerate = (2R)-3-phosphoglycerate. The protein operates within carbohydrate degradation; glycolysis; pyruvate from D-glyceraldehyde 3-phosphate: step 3/5. In terms of biological role, catalyzes the interconversion of 2-phosphoglycerate and 3-phosphoglycerate. The sequence is that of 2,3-bisphosphoglycerate-independent phosphoglycerate mutase from Methanococcus maripaludis (strain C5 / ATCC BAA-1333).